The primary structure comprises 223 residues: Deoxyribose-phosphate aldolase (223 aa).

The active-site Proton donor/acceptor is the Asp91. Residue Lys154 is the Schiff-base intermediate with acetaldehyde of the active site. Lys183 serves as the catalytic Proton donor/acceptor.

Belongs to the DeoC/FbaB aldolase family. DeoC type 1 subfamily.

Its subcellular location is the cytoplasm. The catalysed reaction is 2-deoxy-D-ribose 5-phosphate = D-glyceraldehyde 3-phosphate + acetaldehyde. Its pathway is carbohydrate degradation; 2-deoxy-D-ribose 1-phosphate degradation; D-glyceraldehyde 3-phosphate and acetaldehyde from 2-deoxy-alpha-D-ribose 1-phosphate: step 2/2. Functionally, catalyzes a reversible aldol reaction between acetaldehyde and D-glyceraldehyde 3-phosphate to generate 2-deoxy-D-ribose 5-phosphate. This Geobacillus thermodenitrificans (strain NG80-2) protein is Deoxyribose-phosphate aldolase.